Consider the following 2542-residue polypeptide: Zinc finger FYVE domain-containing protein 26 (2542 aa).

Disordered stretches follow at residues 591-658 (HLPE…GPHT) and 740-811 (VTSN…QVEA). Residues Ser-612 and Ser-616 each carry the phosphoserine modification. Residues 752-772 (RRYRPTAKRHSSLRRGRRTRR) are compositionally biased toward basic residues. A compositionally biased stretch (low complexity) spans 785 to 803 (SLEGTSSELSTSTSEGSLS). The residue at position 798 (Ser-798) is a Phosphoserine. A coiled-coil region spans residues 866–891 (MFVERYQEVIQELARVEHKIENQNSD). The interval 1273-1292 (SPRPSENPSAERKSDSSPKD) is disordered. The segment covering 1281–1290 (SAERKSDSSP) has biased composition (basic and acidic residues). Positions 1495–1522 (VSDMAVPEELKSELQRKLTELRVYQKIL) form a coiled coil. Ser-1739, Ser-1761, Ser-1783, and Ser-1785 each carry phosphoserine. The segment at 1746–1807 (PVHQASDPET…LEFVPPETPP (62 aa)) is disordered. The segment covering 1757-1779 (SRSSSAEFSAAAAAPAPAAPGSA) has biased composition (low complexity). An FYVE-type zinc finger spans residues 1815–1875 (DETESMCMVC…VCDQCYSYYN (61 aa)). Cys-1821, Cys-1824, Cys-1838, Cys-1841, Cys-1846, Cys-1849, Cys-1867, and Cys-1870 together coordinate Zn(2+).

It belongs to the ZFYVE26 family. Interacts with AP5Z1, AP5B1, AP5S1 and SPG11. Interacts with TTC19 and KIF13A.

It is found in the cytoplasm. It localises to the cytoskeleton. The protein localises to the microtubule organizing center. The protein resides in the centrosome. Its subcellular location is the midbody. Functionally, phosphatidylinositol 3-phosphate-binding protein required for the abscission step in cytokinesis: recruited to the midbody during cytokinesis and acts as a regulator of abscission. May also be required for efficient homologous recombination DNA double-strand break repair. The chain is Zinc finger FYVE domain-containing protein 26 (Zfyve26) from Rattus norvegicus (Rat).